Here is a 347-residue protein sequence, read N- to C-terminus: MLMREVTKEERSEFYSKEWSAKKIPKFIVDTLESREFGFDHNGEGPSDRKNQYSDIRDLEDYIRATSPYAVYSSVAFYENPREMEGWRGAELVFDIDAKDLPLKRCNHEPGTVCPICLEDAKELAKDTLIILREELGFENIHVVYSGRGYHIRILDEWALQLDSKSRERILAFISASEIENVEEFRRFLLEKRGWFVLKHGYPRVFRLRLGYFILRVNVPHLLSIGIRRNIAKKILDHKEEIYEGFVRKAILASFPEGVGIESMAKLFALSTRFSKAYFDGRVTVDIKRILRLPSTLHSKVGLIATYVGTKEREVMKFNPFRHAVPKFRKKEVREAYKLWRESLEYE.

Active-site residues include aspartate 95 and aspartate 97. 4 residues coordinate Zn(2+): cysteine 106, histidine 108, cysteine 114, and cysteine 117. The Zinc knuckle motif signature appears at 106 to 117; the sequence is CNHEPGTVCPIC. Aspartate 280 is an active-site residue.

Belongs to the eukaryotic-type primase small subunit family. In terms of assembly, heterodimer of a small subunit (PriS) and a large subunit (PriL). Both participate in formation of the active center, but the ATP-binding site is exclusively located on the small subunit. Requires Mg(2+) as cofactor. Mn(2+) serves as cofactor.

Catalytic subunit of DNA primase, an RNA polymerase that catalyzes the synthesis of short RNA molecules used as primers for DNA polymerase during DNA replication. The small subunit contains the primase catalytic core and has DNA synthesis activity on its own. Binding to the large subunit stabilizes and modulates the activity, increasing the rate of DNA synthesis while decreasing the length of the DNA fragments, and conferring RNA synthesis capability. The DNA polymerase activity may enable DNA primase to also catalyze primer extension after primer synthesis. May also play a role in DNA repair. The protein is DNA primase small subunit PriS of Pyrococcus furiosus (strain ATCC 43587 / DSM 3638 / JCM 8422 / Vc1).